Reading from the N-terminus, the 648-residue chain is MTKEEYDLNIEKLISWANAYYVFDNPIATDEEYDKLARLCLAYEQENPKLSHPNSPNKRVGGIVLDGFIKASHLSRMWSQEDVFNTQELEDWIKRASKVNTNLEFFCQPKFDGASLNLIYENGILKQAITRGDGTVGEDVTNNAKTIFSIPLEIEEKSLIEIRGEVVIKKADFEKINIERAKNGEQLFANPRNAAAGSLRQLDSNITAKRKLFFNVWGIGQNSLEHKKYSQIMEYIYSLGFERPQMQTLASNIEEIESLYHKFISIRNDFEMMLDGMVIKIDDIETQEELGYTVKFPRWSCAYKFPAVEKTTKLKAITLQVGRTGIITPVAEVEPTLIDGSTVSRATLHNFDEIERLDLKINDEVIIIKSGDIIPKITKVFFERRKGDEITISRPTSCPTCNSEVLDEGTMIKCQNLDCPSRVVNSIIYFASKNCMNIDGLGNKIVEQLFNEKKIYDILDIYSLKYEDLQDLEGFKEKKINNLLNAIENTKGSELHRVINALGIEHIGEVASKQICLEFGLDVINKDYDSLIALDGFGEQMANSFIEFMRVNKNLVEKLISIINPKVEIKKEVSENPFKNKTVVITGTMSKSRGEIKSMLEDLGAKVSSSVSKKTDYVIFGEDAGSKYDKAIELGVKLLTEEEMNSLF.

NAD(+) contacts are provided by residues 30–34 and 79–80; these read DEEYD and SQ. Catalysis depends on Lys110, which acts as the N6-AMP-lysine intermediate. NAD(+)-binding residues include Arg131, Glu165, Lys280, and Lys304. Zn(2+) is bound by residues Cys398, Cys401, Cys414, and Cys419. The 76-residue stretch at 573–648 folds into the BRCT domain; it reads VSENPFKNKT…LTEEEMNSLF (76 aa).

Belongs to the NAD-dependent DNA ligase family. LigA subfamily. It depends on Mg(2+) as a cofactor. Mn(2+) serves as cofactor.

It catalyses the reaction NAD(+) + (deoxyribonucleotide)n-3'-hydroxyl + 5'-phospho-(deoxyribonucleotide)m = (deoxyribonucleotide)n+m + AMP + beta-nicotinamide D-nucleotide.. In terms of biological role, DNA ligase that catalyzes the formation of phosphodiester linkages between 5'-phosphoryl and 3'-hydroxyl groups in double-stranded DNA using NAD as a coenzyme and as the energy source for the reaction. It is essential for DNA replication and repair of damaged DNA. This Aliarcobacter butzleri (strain RM4018) (Arcobacter butzleri) protein is DNA ligase.